The chain runs to 1037 residues: Sodium/potassium exporting P-type ATPase cta3 (1037 aa).

Topologically, residues 1 to 61 are cytoplasmic; sequence MVTINISNPV…GVSAWKVLLR (61 aa). Residues 62-82 traverse the membrane as a helical segment; it reads QVLNAMCVVLILAAALSFGTT. Position 83 (aspartate 83) is a topological domain, extracellular. A helical transmembrane segment spans residues 84 to 104; sequence WIEGGVISAIIVLNITVGFIQ. Over 105-281 the chain is Cytoplasmic; the sequence is EYKAEKTMDS…LNVGTPLQRK (177 aa). A helical membrane pass occupies residues 282–302; sequence LTVLAYILFCIAIILAIIVMA. The Extracellular segment spans residues 303–313; that stretch reads AHSFHVTNEVS. The helical transmembrane segment at 314–334 threads the bilayer; the sequence is IYAISLGISIIPESLIAVLSI. The Cytoplasmic portion of the chain corresponds to 335 to 760; sequence TMAMGQKNMS…GRRMFDNIMR (426 aa). The active-site 4-aspartylphosphate intermediate is aspartate 368. 2 residues coordinate Mg(2+): aspartate 368 and threonine 370. Residues threonine 370, glutamate 468, lysine 520, arginine 559, threonine 620, glycine 621, aspartate 622, arginine 678, and lysine 684 each contribute to the ATP site. Aspartate 703 is a binding site for Mg(2+). ATP is bound at residue asparagine 706. Residues 761–781 traverse the membrane as a helical segment; that stretch reads FVLHLLVSNVGEVILLVVGLA. Residues 782–787 lie on the Extracellular side of the membrane; that stretch reads FRDEVH. A helical transmembrane segment spans residues 788-808; that stretch reads LSVFPMSPVEILWCNMITSSF. At 809–844 the chain is on the cytoplasmic side; the sequence is PSMGLGMELAQPDVMERLPHDNKVGIFQKSLIVDMM. The helical transmembrane segment at 845–865 threads the bilayer; that stretch reads VYGFFLGVVSLMTWVVIMYGF. The Extracellular segment spans residues 866–889; the sequence is GTGNLSYDCNAHYHAGCNDVFKAR. The N-linked (GlcNAc...) asparagine glycan is linked to asparagine 869. Residues 890 to 910 traverse the membrane as a helical segment; that stretch reads SAVFAVVTFCILIMAVEVKNF. The Cytoplasmic portion of the chain corresponds to 911 to 939; it reads DNSLFNLHGIPWGEWNFRYFLHTLVENKF. A helical transmembrane segment spans residues 940-960; it reads LAWAIALAAVSVFPTIYIPVI. Residues 961 to 969 are Extracellular-facing; sequence NRDVFKHTY. A helical transmembrane segment spans residues 970–990; the sequence is IGWEWGVVAVAVMFYFFYVEI. At 991–1037 the chain is on the cytoplasmic side; the sequence is WKSIRRSLTNPQKKGKFRRTLSNTITTESKLSEKDLEHRLFLQSRRA. The residue at position 1012 (serine 1012) is a Phosphoserine.

Belongs to the cation transport ATPase (P-type) (TC 3.A.3) family. Type IID subfamily. Requires Mg(2+) as cofactor. The active site is phosphorylated in presence of sodium or potassium and in conditions of higher pH. Not phosphorylated in presence of calcium ions.

It is found in the cell membrane. The enzyme catalyses Na(+)(in) + ATP + H2O = Na(+)(out) + ADP + phosphate + H(+). The catalysed reaction is K(+)(in) + ATP + H2O = K(+)(out) + ADP + phosphate + H(+). In terms of biological role, catalyzes the hydrolysis of ATP coupled with the export of sodium and potassium from the cell. May export sodium less efficiently. May transport other cations such as lithium. Sodium/potassium efflux ATPases are involved in salt tolerance and maintaining the membrane potential across the plasma membrane in high salinity (Na+) or alkaline (K+) environments. The polypeptide is Sodium/potassium exporting P-type ATPase cta3 (Schizosaccharomyces pombe (strain 972 / ATCC 24843) (Fission yeast)).